A 197-amino-acid polypeptide reads, in one-letter code: MTTLQERVAAHFAESIRAKQEAEKVLVEPTVQAAELMLQCLMNDGKILACGNGGSAADAQHFAAEMTGRFEKERMELAAVALTTDTSALTAIGNDYGFNHVFSKQVRALGRAGDVLVGISTSGNSANVIEAVKAAHERDMHVIALTGRDGGKIAAMLKDTDVLLNVPYPRTARIQENHILLIHAMCDCIDSVLLEGM.

In terms of domain architecture, SIS spans 37-197; the sequence is MLQCLMNDGK…CIDSVLLEGM (161 aa). Residue 52–54 coordinates substrate; the sequence is NGG. Zn(2+) contacts are provided by His61 and Glu65. Substrate-binding positions include Glu65, 94–95, 120–122, Ser125, and Gln175; these read ND and STS. Residues Gln175 and His183 each contribute to the Zn(2+) site.

Belongs to the SIS family. GmhA subfamily. In terms of assembly, homotetramer. Zn(2+) serves as cofactor.

It localises to the cytoplasm. The enzyme catalyses 2 D-sedoheptulose 7-phosphate = D-glycero-alpha-D-manno-heptose 7-phosphate + D-glycero-beta-D-manno-heptose 7-phosphate. It participates in carbohydrate biosynthesis; D-glycero-D-manno-heptose 7-phosphate biosynthesis; D-glycero-alpha-D-manno-heptose 7-phosphate and D-glycero-beta-D-manno-heptose 7-phosphate from sedoheptulose 7-phosphate: step 1/1. Catalyzes the isomerization of sedoheptulose 7-phosphate in D-glycero-D-manno-heptose 7-phosphate. This Neisseria meningitidis serogroup C (strain 053442) protein is Phosphoheptose isomerase.